A 272-amino-acid chain; its full sequence is Eukaryotic translation initiation factor 4E homolog (272 aa).

The interval 249–272 (GKLNSGRKPSNTRGGFSSFGNKRY) is disordered. Residues 255–272 (RKPSNTRGGFSSFGNKRY) are compositionally biased toward polar residues.

The protein belongs to the eukaryotic initiation factor 4E family.

Recognizes and binds the 7-methylguanosine-containing mRNA cap during an early step in the initiation of protein synthesis and facilitates ribosome binding by inducing the unwinding of the mRNAs secondary structures. The protein is Eukaryotic translation initiation factor 4E homolog of Acanthamoeba polyphaga mimivirus (APMV).